The following is a 342-amino-acid chain: Ribosomal RNA small subunit methyltransferase H (342 aa).

S-adenosyl-L-methionine-binding positions include 42–44 (GGH), Asp-61, Phe-88, Asp-119, and Gln-126.

It belongs to the methyltransferase superfamily. RsmH family.

It is found in the cytoplasm. The catalysed reaction is cytidine(1402) in 16S rRNA + S-adenosyl-L-methionine = N(4)-methylcytidine(1402) in 16S rRNA + S-adenosyl-L-homocysteine + H(+). Its function is as follows. Specifically methylates the N4 position of cytidine in position 1402 (C1402) of 16S rRNA. The chain is Ribosomal RNA small subunit methyltransferase H from Corynebacterium jeikeium (strain K411).